Here is a 333-residue protein sequence, read N- to C-terminus: Protein VTE6, chloroplastic (333 aa).

The transit peptide at 1–65 (MATISSTLLL…SRADGATAAA (65 aa)) directs the protein to the chloroplast. A run of 6 helical transmembrane segments spans residues 94–114 (LLIF…SGIA), 126–146 (AYGS…TAAT), 171–191 (VIGS…QVGG), 248–268 (TLAG…LGQI), 274–294 (AVCV…GASF), and 307–327 (VVNV…QQFI).

The protein belongs to the TMEM19 family.

It localises to the plastid. The protein resides in the chloroplast membrane. It catalyses the reaction phytyl phosphate + a ribonucleoside 5'-triphosphate = phytyl diphosphate + a ribonucleoside 5'-diphosphate. It carries out the reaction phytyl phosphate + CTP = phytyl diphosphate + CDP. The protein operates within cofactor biosynthesis; tocopherol biosynthesis. In terms of biological role, phytyl-phosphate kinase catalyzing the conversion of phytyl-monophosphate to phytyl-diphosphate. Involved in the activation and reutilization of phytol from chlorophyll degradation in plant metabolism, including tocopherol (vitamin E) biosynthesis. Involved in the biosynthesis of phylloquinone (vitamin K), which is required for the photosystem I (PSI) complex stability. The protein is Protein VTE6, chloroplastic of Arabidopsis thaliana (Mouse-ear cress).